The following is a 447-amino-acid chain: Argininosuccinate synthase (447 aa).

ATP is bound by residues 17–25 (AFSGGLDTS) and Ala-43. Tyr-99 is an L-citrulline binding site. ATP is bound by residues Gly-129 and Thr-131. L-aspartate is bound by residues Thr-131, Asn-135, and Asp-136. An L-citrulline-binding site is contributed by Asn-135. Asp-136 contributes to the ATP binding site. 2 residues coordinate L-citrulline: Arg-139 and Ser-192. Asp-194 provides a ligand contact to ATP. Residues Thr-201, Glu-203, and Glu-280 each contribute to the L-citrulline site.

Belongs to the argininosuccinate synthase family. Type 2 subfamily. Homotetramer.

It localises to the cytoplasm. It carries out the reaction L-citrulline + L-aspartate + ATP = 2-(N(omega)-L-arginino)succinate + AMP + diphosphate + H(+). It participates in amino-acid biosynthesis; L-arginine biosynthesis; L-arginine from L-ornithine and carbamoyl phosphate: step 2/3. This chain is Argininosuccinate synthase, found in Citrobacter koseri (strain ATCC BAA-895 / CDC 4225-83 / SGSC4696).